Here is a 214-residue protein sequence, read N- to C-terminus: Redox-sensing transcriptional repressor Rex (214 aa).

The segment at residues 18-57 (LYYRLVNQLHEKGIDRVNSKTISEALDIDSASIRRDFSYF) is a DNA-binding region (H-T-H motif). 92 to 97 (GVGNLG) serves as a coordination point for NAD(+).

It belongs to the transcriptional regulatory Rex family. Homodimer.

It is found in the cytoplasm. Its function is as follows. Modulates transcription in response to changes in cellular NADH/NAD(+) redox state. The polypeptide is Redox-sensing transcriptional repressor Rex (Staphylococcus carnosus (strain TM300)).